A 506-amino-acid chain; its full sequence is ATP synthase subunit alpha (506 aa).

Over residues 119–129 (GPIEYEGKRPI) the composition is skewed to basic and acidic residues. Residues 119-138 (GPIEYEGKRPIESPAPPIVR) are disordered. An ATP-binding site is contributed by 169 to 176 (GDRQTGKT).

Belongs to the ATPase alpha/beta chains family. In terms of assembly, F-type ATPases have 2 components, CF(1) - the catalytic core - and CF(0) - the membrane proton channel. CF(1) has five subunits: alpha(3), beta(3), gamma(1), delta(1), epsilon(1). CF(0) has three main subunits: a(1), b(2) and c(9-12). The alpha and beta chains form an alternating ring which encloses part of the gamma chain. CF(1) is attached to CF(0) by a central stalk formed by the gamma and epsilon chains, while a peripheral stalk is formed by the delta and b chains.

The protein resides in the cell membrane. The enzyme catalyses ATP + H2O + 4 H(+)(in) = ADP + phosphate + 5 H(+)(out). Its function is as follows. Produces ATP from ADP in the presence of a proton gradient across the membrane. The alpha chain is a regulatory subunit. The sequence is that of ATP synthase subunit alpha from Caldanaerobacter subterraneus subsp. tengcongensis (strain DSM 15242 / JCM 11007 / NBRC 100824 / MB4) (Thermoanaerobacter tengcongensis).